The sequence spans 977 residues: Protein bicaudal C homolog 1 (977 aa).

Residues 1–43 are disordered; sequence MASQSEPGYLAAAQSDPGSNSERSTDSPVAGSEDDLVAAAPLL. Serine 27, serine 32, and serine 45 each carry phosphoserine. 2 consecutive KH domains span residues 134–201 and 286–350; these read RVTL…RARI and PVST…RQYL. Lysine 400 is modified (N6-acetyllysine). Residues 590–621 show a composition bias toward polar residues; it reads SLGEKVLSSNHGDPSMQTAGPEQASPKSNSVE. 3 disordered regions span residues 590-622, 667-702, and 794-848; these read SLGE…SVEG, GTKN…GSER, and EGSS…KSRE. Phosphoserine occurs at positions 614 and 681. A compositionally biased stretch (basic and acidic residues) spans 692–702; it reads LADKKAPGSER. Low complexity predominate over residues 794-803; sequence EGSSLSLSRS. One can recognise an SAM domain in the interval 875-938; sequence FKGSDLPELF…LLAISELSKN (64 aa).

Belongs to the BicC family. Interacts (via KH domains) with ANKS6 (via SAM domain) in an RNA-dependent manner. Interacts with ANKS3. In the adult, predominantly expressed in heart and kidney. In 8 week old mice, expressed in growing primary oocytes and in the stromal cells of the theca.

It localises to the cytoplasm. Putative RNA-binding protein. May be involved in regulating gene expression during embryonic development. The protein is Protein bicaudal C homolog 1 (Bicc1) of Mus musculus (Mouse).